We begin with the raw amino-acid sequence, 361 residues long: tRNA/tmRNA (uracil-C(5))-methyltransferase (361 aa).

S-adenosyl-L-methionine-binding residues include Gln-185, Tyr-213, Asn-218, Glu-234, and Asp-294. Cys-319 acts as the Nucleophile in catalysis. Glu-353 serves as the catalytic Proton acceptor.

It belongs to the class I-like SAM-binding methyltransferase superfamily. RNA M5U methyltransferase family. TrmA subfamily.

It carries out the reaction uridine(54) in tRNA + S-adenosyl-L-methionine = 5-methyluridine(54) in tRNA + S-adenosyl-L-homocysteine + H(+). It catalyses the reaction uridine(341) in tmRNA + S-adenosyl-L-methionine = 5-methyluridine(341) in tmRNA + S-adenosyl-L-homocysteine + H(+). In terms of biological role, dual-specificity methyltransferase that catalyzes the formation of 5-methyluridine at position 54 (m5U54) in all tRNAs, and that of position 341 (m5U341) in tmRNA (transfer-mRNA). The polypeptide is tRNA/tmRNA (uracil-C(5))-methyltransferase (Pseudomonas putida (strain ATCC 700007 / DSM 6899 / JCM 31910 / BCRC 17059 / LMG 24140 / F1)).